Reading from the N-terminus, the 95-residue chain is MVSLIEKNQLDSFIEKNPSWIIDNKTIKKEFKFENFIEAFGFMSKVALLSEKIDHHPDWQNIYNKVKINLTTHDKGGITTNDIKLAEAIDKLINS.

This sequence belongs to the pterin-4-alpha-carbinolamine dehydratase family.

The catalysed reaction is (4aS,6R)-4a-hydroxy-L-erythro-5,6,7,8-tetrahydrobiopterin = (6R)-L-erythro-6,7-dihydrobiopterin + H2O. This Prochlorococcus marinus (strain NATL2A) protein is Putative pterin-4-alpha-carbinolamine dehydratase.